A 247-amino-acid chain; its full sequence is Ribosomal RNA large subunit methyltransferase E (247 aa).

The interval M1 to A21 is disordered. Residues S8–P17 show a composition bias toward basic and acidic residues. S-adenosyl-L-methionine-binding residues include G80, W82, D108, D124, and D153. Residue K193 is the Proton acceptor of the active site.

This sequence belongs to the class I-like SAM-binding methyltransferase superfamily. RNA methyltransferase RlmE family.

It localises to the cytoplasm. The catalysed reaction is uridine(2552) in 23S rRNA + S-adenosyl-L-methionine = 2'-O-methyluridine(2552) in 23S rRNA + S-adenosyl-L-homocysteine + H(+). Its function is as follows. Specifically methylates the uridine in position 2552 of 23S rRNA at the 2'-O position of the ribose in the fully assembled 50S ribosomal subunit. The sequence is that of Ribosomal RNA large subunit methyltransferase E from Polaromonas sp. (strain JS666 / ATCC BAA-500).